Reading from the N-terminus, the 326-residue chain is tRNA-modifying protein YgfZ (326 aa).

Folate is bound by residues tryptophan 27 and tryptophan 189.

It belongs to the tRNA-modifying YgfZ family.

The protein resides in the cytoplasm. Functionally, folate-binding protein involved in regulating the level of ATP-DnaA and in the modification of some tRNAs. It is probably a key factor in regulatory networks that act via tRNA modification, such as initiation of chromosomal replication. This is tRNA-modifying protein YgfZ from Escherichia coli O17:K52:H18 (strain UMN026 / ExPEC).